The primary structure comprises 733 residues: tRNA (guanine(27)-N(2))-dimethyltransferase (733 aa).

The span at M1 to E18 shows a compositional bias: acidic residues. Positions M1–S78 are disordered. T26 bears the Phosphothreonine mark. 2 stretches are compositionally biased toward low complexity: residues P39–P49 and P57–P73. Residue S66 is modified to Phosphoserine. The Nucleolar localization signal motif lies at H135–R139. Residues Y184–H206 form a C2H2-type zinc finger. Positions E227–L688 constitute a Trm1 methyltransferase domain. Positions 260, 307, 357, and 358 each coordinate S-adenosyl-L-methionine. 4 residues coordinate Zn(2+): C488, C491, C513, and C515. A Glycyl lysine isopeptide (Lys-Gly) (interchain with G-Cter in SUMO2) cross-link involves residue K585. 2 positions are modified to phosphoserine: S612 and S707.

This sequence belongs to the class I-like SAM-binding methyltransferase superfamily. Trm1 family. As to expression, widely expressed.

Its subcellular location is the nucleus. The protein localises to the nucleolus. The enzyme catalyses guanosine(27) in tRNA(Tyr) + 2 S-adenosyl-L-methionine = N(2)-dimethylguanosine(27) in tRNA(Tyr) + 2 S-adenosyl-L-homocysteine + 2 H(+). Its function is as follows. Specifically dimethylates a single guanine residue at position 27 of tRNA(Tyr) using S-adenosyl-L-methionine as donor of the methyl groups. Dimethylation at position 27 of tRNA(Tyr) is required for efficient translation of tyrosine codons. Also required to maintain 3-(3-amino-3-carboxypropyl)uridine (acp3U) in the D-loop of several cytoplasmic tRNAs. The polypeptide is tRNA (guanine(27)-N(2))-dimethyltransferase (Homo sapiens (Human)).